We begin with the raw amino-acid sequence, 367 residues long: Nodulation protein 10 (367 aa).

The next 11 helical transmembrane spans lie at 15–37 (FDLLRLFAACQVMFSHAWNWLHL), 46–66 (VFDLLFSAPGVAIFFLISGFL), 88–108 (IFPALFVNIAVMELALLVTGG), 109–129 (LNVTGILQYLFYFTVYILTAA), 155–175 (VLWTLTVELTFYLTLPMLLEI), 183–203 (GALVVAVAALGSWVMAQHFNI), 208–228 (NPFLSVTAGPTFWIFSMGVLA), 245–265 (WWLATHLAITWWVAGTSAAFI), 270–290 (AAPVDAFRIAVLAGLVLSAAH), 312–332 (MLVMHTLIAIGWVGHWWLWIV), and 335–355 (VGTVALAALSWALIEQPAMKL).

It belongs to the acyltransferase 3 family.

The protein localises to the cell membrane. Not known. NodX allows Rhizobium leguminosarum biovar viciae strain TOM to nodulate Afghanistan peas. The protein is Nodulation protein 10 (nodX) of Rhizobium leguminosarum bv. viciae.